The following is a 310-amino-acid chain: GTP-binding protein GTR1 (310 aa).

GTP is bound by residues Ser15, Gly18, Lys19, Ser20, Ser21, Thr35, Thr41, Gly64, His126, Asp129, and Ile166.

Belongs to the GTR/RAG GTP-binding protein family. Heterodimer; with GTR2. Component of the GSE complex composed of GTR1, GTR2, SLM4, MEH1 and LTV1. Interacts with GTR2; the interaction is direct. Interacts with TOR1.

The protein resides in the vacuole membrane. The enzyme catalyses GTP + H2O = GDP + phosphate + H(+). In terms of biological role, GTPase involved in activation of the TORC1 signaling pathway, which promotes growth and represses autophagy in nutrient-rich conditions. Also required for TORC1 inactivation during nitrogen starvation. Required for intracellular sorting of GAP1 out of the endosome. Functionally associated with the inorganic phosphate transporter PHO84, and may be involved in regulating its function or localization. The protein is GTP-binding protein GTR1 (GTR1) of Saccharomyces cerevisiae (strain ATCC 204508 / S288c) (Baker's yeast).